Reading from the N-terminus, the 61-residue chain is Large ribosomal subunit protein eL20 (61 aa).

The protein belongs to the eukaryotic ribosomal protein eL20 family. Part of the 50S ribosomal subunit. Binds 23S rRNA.

This chain is Large ribosomal subunit protein eL20, found in Methanosarcina acetivorans (strain ATCC 35395 / DSM 2834 / JCM 12185 / C2A).